The sequence spans 176 residues: NAD(P)H-quinone oxidoreductase subunit 6, chloroplastic (176 aa).

5 consecutive transmembrane segments (helical) span residues 10-30 (FLLVFLGSGLILGGLGVVLLP), 32-52 (PIYSAFSLGLVLVCTSLFYIL), 61-81 (AQLLIYVGAINVLIIFAVMFM), 92-112 (LWTVGDGITSMVCISLFISLI), and 152-172 (FFLPFELISIILLVALIGAIA).

It belongs to the complex I subunit 6 family. In terms of assembly, NDH is composed of at least 16 different subunits, 5 of which are encoded in the nucleus.

The protein resides in the plastid. It localises to the chloroplast thylakoid membrane. It carries out the reaction a plastoquinone + NADH + (n+1) H(+)(in) = a plastoquinol + NAD(+) + n H(+)(out). The catalysed reaction is a plastoquinone + NADPH + (n+1) H(+)(in) = a plastoquinol + NADP(+) + n H(+)(out). Its function is as follows. NDH shuttles electrons from NAD(P)H:plastoquinone, via FMN and iron-sulfur (Fe-S) centers, to quinones in the photosynthetic chain and possibly in a chloroplast respiratory chain. The immediate electron acceptor for the enzyme in this species is believed to be plastoquinone. Couples the redox reaction to proton translocation, and thus conserves the redox energy in a proton gradient. This chain is NAD(P)H-quinone oxidoreductase subunit 6, chloroplastic (ndhG), found in Solanum lycopersicum (Tomato).